A 596-amino-acid polypeptide reads, in one-letter code: Elongation factor 4 (596 aa).

A tr-type G domain is found at 2–183; sequence KNIRNFSIIA…TIITKIPAPK (182 aa). GTP-binding positions include 14-19 and 130-133; these read DHGKST and NKID.

It belongs to the TRAFAC class translation factor GTPase superfamily. Classic translation factor GTPase family. LepA subfamily.

It is found in the cell inner membrane. The catalysed reaction is GTP + H2O = GDP + phosphate + H(+). Its function is as follows. Required for accurate and efficient protein synthesis under certain stress conditions. May act as a fidelity factor of the translation reaction, by catalyzing a one-codon backward translocation of tRNAs on improperly translocated ribosomes. Back-translocation proceeds from a post-translocation (POST) complex to a pre-translocation (PRE) complex, thus giving elongation factor G a second chance to translocate the tRNAs correctly. Binds to ribosomes in a GTP-dependent manner. The sequence is that of Elongation factor 4 from Campylobacter lari (strain RM2100 / D67 / ATCC BAA-1060).